Consider the following 230-residue polypeptide: MIKTQSKLSDPRLQSRIGYEFKQLELLQLALTHRSVSHKYNYERLEFLGDSLLGMIIANYLYQAYPHENEGRLTRMRATLVRQEALGKIANDLKLSRCLILSTGELKSGGHHRESILADTVEAIIGAIYVDSNDLNLLKNIVLKWYIPYLDHIEPTDQLKDPKSRLQEYLQARKKPLPVYEVVDIQGDAPNQHFKVVCLVEGLPRVMGEGSSRRFAEQTAAAEILKLLEQ.

In terms of domain architecture, RNase III spans 10-133 (DPRLQSRIGY…IIGAIYVDSN (124 aa)). E46 lines the Mg(2+) pocket. Residue D50 is part of the active site. 2 residues coordinate Mg(2+): D119 and E122. The active site involves E122. Residues 161-230 (DPKSRLQEYL…AAEILKLLEQ (70 aa)) enclose the DRBM domain.

It belongs to the ribonuclease III family. Homodimer. Mg(2+) serves as cofactor.

It localises to the cytoplasm. It catalyses the reaction Endonucleolytic cleavage to 5'-phosphomonoester.. In terms of biological role, digests double-stranded RNA. Involved in the processing of primary rRNA transcript to yield the immediate precursors to the large and small rRNAs (23S and 16S). Processes some mRNAs, and tRNAs when they are encoded in the rRNA operon. Processes pre-crRNA and tracrRNA of type II CRISPR loci if present in the organism. The protein is Ribonuclease 3 of Acinetobacter baylyi (strain ATCC 33305 / BD413 / ADP1).